The chain runs to 190 residues: Elongation factor P (190 aa).

N6-(3,6-diaminohexanoyl)-5-hydroxylysine is present on K34.

The protein belongs to the elongation factor P family. Post-translationally, may be beta-lysylated on the epsilon-amino group of Lys-34 by the combined action of EpmA and EpmB, and then hydroxylated on the C5 position of the same residue by EpmC (if this protein is present). Lysylation is critical for the stimulatory effect of EF-P on peptide-bond formation. The lysylation moiety may extend toward the peptidyltransferase center and stabilize the terminal 3-CCA end of the tRNA. Hydroxylation of the C5 position on Lys-34 may allow additional potential stabilizing hydrogen-bond interactions with the P-tRNA.

The protein localises to the cytoplasm. It functions in the pathway protein biosynthesis; polypeptide chain elongation. In terms of biological role, involved in peptide bond synthesis. Alleviates ribosome stalling that occurs when 3 or more consecutive Pro residues or the sequence PPG is present in a protein, possibly by augmenting the peptidyl transferase activity of the ribosome. Modification of Lys-34 is required for alleviation. This Psychrobacter arcticus (strain DSM 17307 / VKM B-2377 / 273-4) protein is Elongation factor P.